The sequence spans 61 residues: Large ribosomal subunit protein uL30 (61 aa).

It belongs to the universal ribosomal protein uL30 family. Part of the 50S ribosomal subunit.

In Lactobacillus delbrueckii subsp. bulgaricus (strain ATCC 11842 / DSM 20081 / BCRC 10696 / JCM 1002 / NBRC 13953 / NCIMB 11778 / NCTC 12712 / WDCM 00102 / Lb 14), this protein is Large ribosomal subunit protein uL30.